Reading from the N-terminus, the 197-residue chain is Imidazoleglycerol-phosphate dehydratase (197 aa).

The protein belongs to the imidazoleglycerol-phosphate dehydratase family.

Its subcellular location is the cytoplasm. The catalysed reaction is D-erythro-1-(imidazol-4-yl)glycerol 3-phosphate = 3-(imidazol-4-yl)-2-oxopropyl phosphate + H2O. The protein operates within amino-acid biosynthesis; L-histidine biosynthesis; L-histidine from 5-phospho-alpha-D-ribose 1-diphosphate: step 6/9. The chain is Imidazoleglycerol-phosphate dehydratase from Chromohalobacter salexigens (strain ATCC BAA-138 / DSM 3043 / CIP 106854 / NCIMB 13768 / 1H11).